Consider the following 80-residue polypeptide: Type VII secretion system accessory factor EsaB (80 aa).

This sequence belongs to the EsaB family.

It is found in the cytoplasm. Its function is as follows. Seems to regulate secreted factors that contribute to the establishment of persistent infections in the host. This chain is Type VII secretion system accessory factor EsaB, found in Staphylococcus aureus (strain COL).